Consider the following 109-residue polypeptide: uncharacterized protein (109 aa).

The chain crosses the membrane as a helical span at residues Val-26–Leu-48.

The protein localises to the membrane. This is an uncharacterized protein from Saccharomyces cerevisiae (strain ATCC 204508 / S288c) (Baker's yeast).